Consider the following 693-residue polypeptide: Polyribonucleotide nucleotidyltransferase (693 aa).

Mg(2+) contacts are provided by Asp486 and Asp492. The KH domain maps to 553 to 612 (PRFTTLKIHPDKIRDVIGKGGATIRALTEETGTSIDISDDGTVKIASVDKAAGDEARRRI). The 69-residue stretch at 622–690 (GRIYEGRVVK…KQGRIRLSMK (69 aa)) folds into the S1 motif domain.

The protein belongs to the polyribonucleotide nucleotidyltransferase family. As to quaternary structure, component of the RNA degradosome, which is a multiprotein complex involved in RNA processing and mRNA degradation. Mg(2+) is required as a cofactor.

Its subcellular location is the cytoplasm. The catalysed reaction is RNA(n+1) + phosphate = RNA(n) + a ribonucleoside 5'-diphosphate. Its function is as follows. Involved in mRNA degradation. Catalyzes the phosphorolysis of single-stranded polyribonucleotides processively in the 3'- to 5'-direction. The sequence is that of Polyribonucleotide nucleotidyltransferase from Thioalkalivibrio sulfidiphilus (strain HL-EbGR7).